A 960-amino-acid polypeptide reads, in one-letter code: CWF19-like protein 2 (960 aa).

Disordered regions lie at residues M1 to V222, E261 to L552, A624 to T648, and A712 to E731. The stretch at S13–E101 forms a coiled coil. Basic and acidic residues predominate over residues S16–D52. The segment covering K73 to K96 has biased composition (basic residues). Positions S108–V117 are enriched in acidic residues. A compositionally biased stretch (low complexity) spans E135–N146. A coiled-coil region spans residues S163 to D279. Basic and acidic residues-rich tracts occupy residues A165–K181, E261–S372, and K404–F417. The segment covering S507 to Q518 has biased composition (polar residues). Residues S540 to K605 are a coiled coil. Residues E541 to L552 are compositionally biased toward acidic residues. Basic and acidic residues predominate over residues Q713–E731.

It belongs to the CWF19 family.

This chain is CWF19-like protein 2 (cwf19l2), found in Danio rerio (Zebrafish).